A 1202-amino-acid polypeptide reads, in one-letter code: MLFAKLLLKPVQILFAYAKAKSKEISIKEANLLIFQDETDNLRKISTPNKLAVSLAGGLKALLSSNQLCHAFHYHNKKIRLVDTSLNNLPVPILLPKLINYLLARKSQKSAAEWEEIERALLSCCKRSKDPSILFPTDVPCSLDDDVSFLTFKGHKNHLENRSFFHDSESDNFKVVLSNCAINSKEDNNLVTEDRVNLGAKLLLVPVQNLIKLLKVSKISVDLAVIDHSFQDQKLTLEVGNGGLEVVKLFGGWIRILESECLGHVFSFKKTMKRKEVALVNRKADIDTTDLFIALRQLVDSKFKSYGIKAQKHAINRISKLGKMITSNHAEEKLTTIPITEAKKESVSNTALIARKNIIRERKYLSRMFDIFEHIDSYFNHEINMLLVDLLLEPLQVAFVYKNLARRWISLEEIENLWLKVFDSSHPLGKSITSTLQAIGTRKILTQLSINMIPRYNQDNCSAGDIYILCFSENCWLYSVLQKTIDHWVNENVELFYKKFEILKSLLIEDIANSTFSKEVSLNSSLRWYCVAILVTPLQLIINHLKDKTEMLSLDAVMTLILGKNTREVNSSIEELKITDCLSFLLEHNIFNTFLVYNEGIVKLNKDFDDFTPLNLLKCVNYSLMEFQKNSTFDMLEKLYEIGREIDMSKFSTLKYNLQLPNVDLLKESEAVSETKNTKNNTFILKSDLKEEERLTNFTIEEINKHKAIGVALRKLLEEADTSSNFSSSNNHVLDSSKHTVSSASTSSRKFIENYKSLESIGLTSFVKDNKLKASKELQKLIEENVFPKNLILFIFRKCVIGIKSFEKLQSYVFTYYCERYPKLILKRVLRFLEEIGFITSQYPRKLTDTGALFLKHPSEWGVLQHTFISSNFFENVPCYISLEQSLQNFQNDIRPDTVRTTAMKAIIKKLLKSLRKLEGPVKIACFGSYRTGLMTKNSDLDLVIYSSKEALLPYYDRVKSIIKNEFSNVMPIRGARIPIIKFTGQYNIHCDLSFDNLLPIHNSDLILNYSLIDERVKTLLMLVKYWASNRLIDKTHHAFPSSYTWCIMVIFYLQQIPEPILPNLQKLSTQYSKIVRDNDYGNVNCWFNRDTECYRGSMQKGRKNIALLLRGFFCYYGLTTQYSFDWEAYMIDISSSQLKRKSTEFKDCPFVVLDPFLKKKNLTKALTQKSVKVVRYELERACRILSDPKCNLDHLLDPLIQ.

The 55-residue stretch at 1105–1159 (NIALLLRGFFCYYGLTTQYSFDWEAYMIDISSSQLKRKSTEFKDCPFVVLDPFLK) folds into the PAP-associated domain.

The chain is Caffeine-induced protein 16 (cid16) from Schizosaccharomyces pombe (strain 972 / ATCC 24843) (Fission yeast).